Reading from the N-terminus, the 305-residue chain is Oxygen-dependent coproporphyrinogen-III oxidase (305 aa).

Ser-92 is a substrate binding site. Residues His-96 and His-106 each contribute to the a divalent metal cation site. His-106 (proton donor) is an active-site residue. 108–110 (NVR) provides a ligand contact to substrate. A divalent metal cation contacts are provided by His-145 and His-175. Residues 239–274 (YVEFNLLFDRGTLFGLQSGGRAESILISLPPLVRWE) are important for dimerization. 257-259 (GGR) lines the substrate pocket.

It belongs to the aerobic coproporphyrinogen-III oxidase family. As to quaternary structure, homodimer. Requires a divalent metal cation as cofactor.

It is found in the cytoplasm. The catalysed reaction is coproporphyrinogen III + O2 + 2 H(+) = protoporphyrinogen IX + 2 CO2 + 2 H2O. Its pathway is porphyrin-containing compound metabolism; protoporphyrin-IX biosynthesis; protoporphyrinogen-IX from coproporphyrinogen-III (O2 route): step 1/1. Functionally, involved in the heme biosynthesis. Catalyzes the aerobic oxidative decarboxylation of propionate groups of rings A and B of coproporphyrinogen-III to yield the vinyl groups in protoporphyrinogen-IX. This Xylella fastidiosa (strain M12) protein is Oxygen-dependent coproporphyrinogen-III oxidase.